The sequence spans 280 residues: Probable 2-(5''-triphosphoribosyl)-3'-dephosphocoenzyme-A synthase (280 aa).

Belongs to the CitG/MdcB family.

It catalyses the reaction 3'-dephospho-CoA + ATP = 2'-(5''-triphospho-alpha-D-ribosyl)-3'-dephospho-CoA + adenine. The sequence is that of Probable 2-(5''-triphosphoribosyl)-3'-dephosphocoenzyme-A synthase from Lactiplantibacillus plantarum (strain ATCC BAA-793 / NCIMB 8826 / WCFS1) (Lactobacillus plantarum).